A 212-amino-acid chain; its full sequence is Ribosomal RNA small subunit methyltransferase G (212 aa).

S-adenosyl-L-methionine is bound by residues Gly-80, Leu-85, 131 to 132 (AE), and Arg-146.

Belongs to the methyltransferase superfamily. RNA methyltransferase RsmG family.

The protein localises to the cytoplasm. The enzyme catalyses guanosine(527) in 16S rRNA + S-adenosyl-L-methionine = N(7)-methylguanosine(527) in 16S rRNA + S-adenosyl-L-homocysteine. Specifically methylates the N7 position of guanine in position 527 of 16S rRNA. This is Ribosomal RNA small subunit methyltransferase G from Xanthomonas campestris pv. campestris (strain 8004).